The chain runs to 102 residues: Protein RnfH (102 aa).

The protein belongs to the UPF0125 (RnfH) family.

In Haemophilus influenzae (strain 86-028NP), this protein is Protein RnfH.